A 484-amino-acid chain; its full sequence is uncharacterized protein (484 aa).

A compositionally biased stretch (low complexity) spans 1–14 (MIDSTSTATATSKT). A disordered region spans residues 1–32 (MIDSTSTATATSKTVELNTNGSKTDASSENGT). Residues 15 to 32 (VELNTNGSKTDASSENGT) are compositionally biased toward polar residues. Lys-305 is subject to N6-(pyridoxal phosphate)lysine.

The protein belongs to the class-III pyridoxal-phosphate-dependent aminotransferase family. Requires pyridoxal 5'-phosphate as cofactor.

This is an uncharacterized protein from Schizosaccharomyces pombe (strain 972 / ATCC 24843) (Fission yeast).